The chain runs to 294 residues: NADH-cytochrome b5 reductase 2 (294 aa).

Residues 11-27 (VLLPVVAAATSIGLVYH) form a helical membrane-spanning segment. The 105-residue stretch at 45–149 (DEWIDLKLKK…KGPIVKWKWE (105 aa)) folds into the FAD-binding FR-type domain. 152–187 (QFQSIALIGGGTGITPLYQLLHEITKNPEDKTKVKL) contacts FAD.

The protein belongs to the flavoprotein pyridine nucleotide cytochrome reductase family. Requires FAD as cofactor.

It is found in the mitochondrion outer membrane. The catalysed reaction is 2 Fe(III)-[cytochrome b5] + NADH = 2 Fe(II)-[cytochrome b5] + NAD(+) + H(+). Functionally, may mediate the reduction of outer membrane cytochrome b5. This Meyerozyma guilliermondii (strain ATCC 6260 / CBS 566 / DSM 6381 / JCM 1539 / NBRC 10279 / NRRL Y-324) (Yeast) protein is NADH-cytochrome b5 reductase 2 (MCR1).